The following is a 139-amino-acid chain: Actin-depolymerizing factor 7 (139 aa).

An ADF-H domain is found at 7 to 139 (GMAVDDECKL…GLDVIRGRAN (133 aa)).

The protein belongs to the actin-binding proteins ADF family.

Its function is as follows. Actin-depolymerizing protein. Severs actin filaments (F-actin) and binds to actin monomers. The protein is Actin-depolymerizing factor 7 (ADF7) of Oryza sativa subsp. japonica (Rice).